The primary structure comprises 277 residues: R-spondin-3 (277 aa).

Residues 1–21 (MHLRLISCFFIILNFMEYIGS) form the signal peptide. FU repeat units lie at residues 35–86 (PNVS…GYYG) and 92–135 (INKC…GLEA). A glycan (N-linked (GlcNAc...) asparagine) is linked at Asn-36. 11 cysteine pairs are disulfide-bonded: Cys-41–Cys-48, Cys-45–Cys-54, Cys-57–Cys-76, Cys-80–Cys-95, Cys-98–Cys-105, Cys-102–Cys-111, Cys-114–Cys-125, Cys-129–Cys-142, Cys-148–Cys-190, Cys-159–Cys-166, and Cys-199–Cys-206. In terms of domain architecture, TSP type-1 spans 147–207 (HCEASEWSPW…TCIVQRKKCS (61 aa)). Residues 210-277 (ERGKKGRERK…QKSVSVSTVH (68 aa)) form a disordered region. A compositionally biased stretch (basic residues) spans 213–223 (KKGRERKRKKL). The segment covering 232-245 (SSSSDSKGLESSIE) has biased composition (low complexity).

Belongs to the R-spondin family. Interacts with the extracellular domain of FZD8 and LRP6. It however does not form a ternary complex with FZD8 and LRP6. Interacts with WNT1. Binds heparin. Interacts with LGR4, LGR5 and LGR6. In terms of tissue distribution, highly expressed in endothelial cells.

It is found in the secreted. In terms of biological role, activator of the canonical Wnt signaling pathway by acting as a ligand for LGR4-6 receptors, which acts as a key regulator of angiogenesis. Upon binding to LGR4-6 (LGR4, LGR5 or LGR6), LGR4-6 associate with phosphorylated LRP6 and frizzled receptors that are activated by extracellular Wnt receptors, triggering the canonical Wnt signaling pathway to increase expression of target genes. Also regulates the canonical Wnt/beta-catenin-dependent pathway and non-canonical Wnt signaling by acting as an inhibitor of ZNRF3, an important regulator of the Wnt signaling pathway. Acts as a ligand for frizzled FZD8 and LRP6. May negatively regulate the TGF-beta pathway. Acts as a key regulator of angiogenesis by controlling vascular stability and pruning: acts by activating the non-canonical Wnt signaling pathway in endothelial cells. Can also amplify Wnt signaling pathway independently of LGR4-6 receptors, possibly by acting as a direct antagonistic ligand to RNF43 and ZNRF3. The polypeptide is R-spondin-3 (Rspo3) (Mus musculus (Mouse)).